Consider the following 361-residue polypeptide: MDYHLRVLFSVSLIFVFVSVSVCGDEDVLIRQVVDETEPKVLSSEDHFTLFKKKFGKVYGSIEEHYYRFSVFKANLLRAMRHQKMDPSARHGVTQFSDLTRSEFRRKHLGVKGGFKLPKDANQAPILPTQNLPEEFDWRDRGAVTPVKNQGSCGSCWSFSTTGALEGAHFLATGKLVSLSEQQLVDCDHECDPEEEGSCDSGCNGGLMNSAFEYTLKTGGLMREKDYPYTGTDGGSCKLDRSKIVASVSNFSVVSINEDQIAANLIKNGPLAVAINAAYMQTYIGGVSCPYICSRRLNHGVLLVGYGSAGFSQARLKEKPYWIIKNSWGESWGENGFYKICKGRNICGVDSLVSTVAATTS.

Positions 1-24 (MDYHLRVLFSVSLIFVFVSVSVCG) are cleaved as a signal peptide. Positions 25–131 (DEDVLIRQVV…NQAPILPTQN (107 aa)) are cleaved as a propeptide — activation peptide. 2 disulfide bridges follow: Cys153/Cys203 and Cys187/Cys237. The active site involves Cys156. N-linked (GlcNAc...) asparagine glycosylation is present at Asn250. Cysteines 293 and 347 form a disulfide. Residues His299 and Asn326 contribute to the active site.

The protein belongs to the peptidase C1 family.

The protein resides in the lytic vacuole. Probable thiol protease. The polypeptide is Probable cysteine protease RD19B (Arabidopsis thaliana (Mouse-ear cress)).